The sequence spans 325 residues: Small ribosomal subunit protein RACK1 (325 aa).

WD repeat units lie at residues 13-44 (AHTD…ILWH), 61-91 (GHSH…RLWD), 103-133 (GHTK…KLWN), 147-179 (AHSD…KVWN), 191-221 (GHSG…LLWD), 232-261 (DAGS…KIWD), and 291-321 (KKVI…RVWG).

The protein belongs to the WD repeat G protein beta family. Ribosomal protein RACK1 subfamily.

In terms of biological role, plays a role in hormone-mediated cell division. This chain is Small ribosomal subunit protein RACK1 (GB1), found in Medicago sativa (Alfalfa).